Here is a 203-residue protein sequence, read N- to C-terminus: Nucleoside triphosphate pyrophosphatase (203 aa).

Aspartate 80 acts as the Proton acceptor in catalysis.

Belongs to the Maf family. A divalent metal cation is required as a cofactor.

It localises to the cytoplasm. The enzyme catalyses a ribonucleoside 5'-triphosphate + H2O = a ribonucleoside 5'-phosphate + diphosphate + H(+). It catalyses the reaction a 2'-deoxyribonucleoside 5'-triphosphate + H2O = a 2'-deoxyribonucleoside 5'-phosphate + diphosphate + H(+). In terms of biological role, nucleoside triphosphate pyrophosphatase. May have a dual role in cell division arrest and in preventing the incorporation of modified nucleotides into cellular nucleic acids. The sequence is that of Nucleoside triphosphate pyrophosphatase from Gluconobacter oxydans (strain 621H) (Gluconobacter suboxydans).